Reading from the N-terminus, the 1039-residue chain is Alpha-mannosidase 2C1 (1039 aa).

Co(2+) contacts are provided by H259, D261, D371, and H576. D371 acts as the Nucleophile in catalysis.

Belongs to the glycosyl hydrolase 38 family. It depends on Co(2+) as a cofactor. As to expression, expressed in kidney and liver (at protein level). Widely expressed, with highest levels in lung, ovary and testis. Also detected at lower levels in heart, brain, liver, spleen, kidney and thymus.

It is found in the cytoplasm. The catalysed reaction is Hydrolysis of terminal, non-reducing alpha-D-mannose residues in alpha-D-mannosides.. Its activity is regulated as follows. Inhibited by 1,4-dideoxy-1,4-imino-d-mannitol (DIM) and EDTA. Functionally, cleaves alpha 1,2-, alpha 1,3-, and alpha 1,6-linked mannose residues from glycoproteins. Involved in the degradation of free oligosaccharides in the cytoplasm. This chain is Alpha-mannosidase 2C1, found in Mus musculus (Mouse).